The primary structure comprises 115 residues: uncharacterized protein (115 aa).

The protein belongs to the transposase 34 family.

This is an uncharacterized protein from Sinorhizobium fredii (strain NBRC 101917 / NGR234).